The sequence spans 180 residues: Translation initiation factor IF-3 (180 aa).

This sequence belongs to the IF-3 family. As to quaternary structure, monomer.

Its subcellular location is the cytoplasm. Its function is as follows. IF-3 binds to the 30S ribosomal subunit and shifts the equilibrium between 70S ribosomes and their 50S and 30S subunits in favor of the free subunits, thus enhancing the availability of 30S subunits on which protein synthesis initiation begins. The protein is Translation initiation factor IF-3 of Shewanella oneidensis (strain ATCC 700550 / JCM 31522 / CIP 106686 / LMG 19005 / NCIMB 14063 / MR-1).